A 323-amino-acid polypeptide reads, in one-letter code: Small ribosomal subunit protein uS3 (323 aa).

Positions 17-86 (IDEFFADELG…DPQIDVQEVD (70 aa)) constitute a KH type-2 domain. Residues 251–303 (ADPGVSSEDEEVVTEPVDIGGDDEDVEDIEVVSDDSGNDTETVAEEVEELDAE) are disordered. A compositionally biased stretch (acidic residues) spans 270 to 303 (GGDDEDVEDIEVVSDDSGNDTETVAEEVEELDAE).

The protein belongs to the universal ribosomal protein uS3 family. As to quaternary structure, part of the 30S ribosomal subunit.

Its function is as follows. Binds the lower part of the 30S subunit head. The chain is Small ribosomal subunit protein uS3 from Haloquadratum walsbyi (strain DSM 16790 / HBSQ001).